Reading from the N-terminus, the 254-residue chain is Pyridoxine 5'-phosphate synthase (254 aa).

Residue Asn12 participates in 3-amino-2-oxopropyl phosphate binding. 14–15 (DH) contributes to the 1-deoxy-D-xylulose 5-phosphate binding site. Arg23 provides a ligand contact to 3-amino-2-oxopropyl phosphate. His48 (proton acceptor) is an active-site residue. Residues Arg50 and His55 each contribute to the 1-deoxy-D-xylulose 5-phosphate site. The active-site Proton acceptor is Glu75. Position 105 (Thr105) interacts with 1-deoxy-D-xylulose 5-phosphate. Catalysis depends on His199, which acts as the Proton donor. Residues Gly200 and 221–222 (GF) each bind 3-amino-2-oxopropyl phosphate.

Belongs to the PNP synthase family. As to quaternary structure, homooctamer; tetramer of dimers.

The protein localises to the cytoplasm. It carries out the reaction 3-amino-2-oxopropyl phosphate + 1-deoxy-D-xylulose 5-phosphate = pyridoxine 5'-phosphate + phosphate + 2 H2O + H(+). The protein operates within cofactor biosynthesis; pyridoxine 5'-phosphate biosynthesis; pyridoxine 5'-phosphate from D-erythrose 4-phosphate: step 5/5. Functionally, catalyzes the complicated ring closure reaction between the two acyclic compounds 1-deoxy-D-xylulose-5-phosphate (DXP) and 3-amino-2-oxopropyl phosphate (1-amino-acetone-3-phosphate or AAP) to form pyridoxine 5'-phosphate (PNP) and inorganic phosphate. This Rhodopseudomonas palustris (strain ATCC BAA-98 / CGA009) protein is Pyridoxine 5'-phosphate synthase.